Here is a 205-residue protein sequence, read N- to C-terminus: dTTP/UTP pyrophosphatase (205 aa).

Asp-71 serves as the catalytic Proton acceptor.

Belongs to the Maf family. YhdE subfamily. A divalent metal cation serves as cofactor.

Its subcellular location is the cytoplasm. It carries out the reaction dTTP + H2O = dTMP + diphosphate + H(+). The catalysed reaction is UTP + H2O = UMP + diphosphate + H(+). Nucleoside triphosphate pyrophosphatase that hydrolyzes dTTP and UTP. May have a dual role in cell division arrest and in preventing the incorporation of modified nucleotides into cellular nucleic acids. In Syntrophus aciditrophicus (strain SB), this protein is dTTP/UTP pyrophosphatase.